Here is a 355-residue protein sequence, read N- to C-terminus: MWNKNRLTQMLSIEYPIIQAGMAGSTTPKLVASVSNSGGLGTIGAGYFNTQQLEDEIDYVRQLTSNSFGVNVFVPSQQSYTSSQIENMNAWLKPYRRALHLEEPVVKITEEQQFKCHIDTIIKKQVPVCCFTFGIPNESIIKRLKEANIKLIGTATSVDEAIANEKAGMDAIVAQGSEAGGHRGSFLKPKNQLPMVGTISLVPQIVDVVSIPVIAAGGIMDGRGVLASIVLGAEGVQMGTAFLTSQDSNASELLRDAIINSKETDTVVTKAFSGKLARGINNRFIEEMSQYEGDIPDYPIQNELTSSIRKAAANIGDKELTHMWSGQSPRLATTHPANTIMSNIINQINQIMQYK.

Residues N71, Q175, G180, G218, and 237–240 (QMGT) contribute to the FMN site.

This sequence belongs to the nitronate monooxygenase family. NMO class I subfamily. The cofactor is FMN.

It carries out the reaction 3 propionate 3-nitronate + 3 O2 + H2O = 3 3-oxopropanoate + 2 nitrate + nitrite + H2O2 + 3 H(+). Functionally, nitronate monooxygenase that uses molecular oxygen to catalyze the oxidative denitrification of alkyl nitronates. Acts on propionate 3-nitronate (P3N), the presumed physiological substrate. Probably functions in the detoxification of P3N, a metabolic poison produced by plants and fungi as a defense mechanism. The chain is Probable nitronate monooxygenase from Staphylococcus aureus (strain MRSA252).